The chain runs to 475 residues: uncharacterized protein (475 aa).

A helical membrane pass occupies residues 7–28; sequence HVISIFETLGAYFINIFYNFLY. Asparagine 73, asparagine 83, and asparagine 195 each carry an N-linked (GlcNAc...) asparagine; by host glycan. The stretch at 183-233 forms a coiled coil; it reads ELEETYARLSSYNRSLLHQIEELTSEKKSLLADLSTLRKKYEKRQSEYRRL. Residues 295 to 305 are compositionally biased toward polar residues; the sequence is SQELTSKSPNN. The disordered stretch occupies residues 295–324; that stretch reads SQELTSKSPNNYPVPHSRTIVSKPPDNYPV. N-linked (GlcNAc...) asparagine; by host glycosylation is found at asparagine 450 and asparagine 460.

The protein belongs to the asfivirus B475L family.

The protein resides in the host membrane. This is an uncharacterized protein from Ornithodoros (relapsing fever ticks).